The chain runs to 249 residues: MRVKIVSKPTSQLNYTVEKIKNISNKLGFEVVDIDFDYVIAVGGDGTLLRAVKLGKPVIAIKAGRRGLLMDVPVDKIEDALLRLKKGDYNEEEYMLLEMVHNDKVELGFNEIGILYDRPEAIKVGISFDTERVSVEGDGVLVSTPQGSSGWGMSATNSLLYKDLNAIEIIFVNPIFYYLRSVVIPPKSLILRLEDKGYPQTARVVVDGEVVTLIKTNQEITVRVSQHKAKILRFFKLDLIGEVLHAYHI.

Catalysis depends on Asp-45, which acts as the Proton acceptor. Residues 45-46, Arg-50, 110-111, Asp-138, and 149-154 contribute to the NAD(+) site; these read DG, NE, and SGWGMS.

Belongs to the NAD kinase family. The cofactor is a divalent metal cation.

It is found in the cytoplasm. The enzyme catalyses NAD(+) + ATP = ADP + NADP(+) + H(+). Functionally, involved in the regulation of the intracellular balance of NAD and NADP, and is a key enzyme in the biosynthesis of NADP. Catalyzes specifically the phosphorylation on 2'-hydroxyl of the adenosine moiety of NAD to yield NADP. The polypeptide is NAD kinase (Saccharolobus solfataricus (strain ATCC 35092 / DSM 1617 / JCM 11322 / P2) (Sulfolobus solfataricus)).